The sequence spans 173 residues: RNA 2',3'-cyclic phosphodiesterase (173 aa).

H38 functions as the Proton donor in the catalytic mechanism. Short sequence motifs (HXTX) lie at residues 38-41 (HITV) and 118-121 (HLTI). The active-site Proton acceptor is the H118.

It belongs to the 2H phosphoesterase superfamily. ThpR family.

It carries out the reaction a 3'-end 2',3'-cyclophospho-ribonucleotide-RNA + H2O = a 3'-end 2'-phospho-ribonucleotide-RNA + H(+). Functionally, hydrolyzes RNA 2',3'-cyclic phosphodiester to an RNA 2'-phosphomonoester. This chain is RNA 2',3'-cyclic phosphodiesterase, found in Methanocaldococcus jannaschii (strain ATCC 43067 / DSM 2661 / JAL-1 / JCM 10045 / NBRC 100440) (Methanococcus jannaschii).